The chain runs to 154 residues: Transcription antitermination protein NusB (154 aa).

This sequence belongs to the NusB family.

Its function is as follows. Involved in transcription antitermination. Required for transcription of ribosomal RNA (rRNA) genes. Binds specifically to the boxA antiterminator sequence of the ribosomal RNA (rrn) operons. This chain is Transcription antitermination protein NusB, found in Enterococcus faecalis (strain ATCC 700802 / V583).